A 126-amino-acid chain; its full sequence is Probable prefoldin subunit 4 (126 aa).

Belongs to the prefoldin subunit beta family. Heterohexamer of two PFD-alpha type and four PFD-beta type subunits.

Its function is as follows. Binds specifically to cytosolic chaperonin (c-CPN) and transfers target proteins to it. Binds to nascent polypeptide chain and promotes folding in an environment in which there are many competing pathways for nonnative proteins. Appears to play a non-essential role. This chain is Probable prefoldin subunit 4, found in Caenorhabditis briggsae.